A 153-amino-acid chain; its full sequence is Ribonuclease H (153 aa).

An RNase H type-1 domain is found at 1-141; that stretch reads MKKIQLFTDG…CDDLARRAAE (141 aa). 4 residues coordinate Mg(2+): Asp-9, Glu-47, Asp-69, and Asp-133.

The protein belongs to the RNase H family. As to quaternary structure, monomer. Mg(2+) is required as a cofactor.

It localises to the cytoplasm. It catalyses the reaction Endonucleolytic cleavage to 5'-phosphomonoester.. Endonuclease that specifically degrades the RNA of RNA-DNA hybrids. The sequence is that of Ribonuclease H from Psychromonas ingrahamii (strain DSM 17664 / CCUG 51855 / 37).